The sequence spans 641 residues: Threonine--tRNA ligase (641 aa).

A TGS domain is found at 1 to 61; sequence MIKINLLNHQ…TQDGDLEILA (61 aa). A catalytic region spans residues 240 to 538; that stretch reads DHKRLNKKLD…LIEENKGVFP (299 aa). Residues cysteine 334, histidine 385, and histidine 515 each contribute to the Zn(2+) site.

Belongs to the class-II aminoacyl-tRNA synthetase family. Homodimer. It depends on Zn(2+) as a cofactor.

The protein resides in the cytoplasm. The catalysed reaction is tRNA(Thr) + L-threonine + ATP = L-threonyl-tRNA(Thr) + AMP + diphosphate + H(+). Its function is as follows. Catalyzes the attachment of threonine to tRNA(Thr) in a two-step reaction: L-threonine is first activated by ATP to form Thr-AMP and then transferred to the acceptor end of tRNA(Thr). Also edits incorrectly charged L-seryl-tRNA(Thr). In Phytoplasma australiense, this protein is Threonine--tRNA ligase.